Reading from the N-terminus, the 492-residue chain is Protein nucleotidyltransferase YdiU (492 aa).

ATP-binding residues include G91, G93, R94, K114, D126, G127, R180, and R187. Catalysis depends on D256, which acts as the Proton acceptor. Mg(2+)-binding residues include N257 and D266. D266 lines the ATP pocket.

It belongs to the SELO family. Mg(2+) serves as cofactor. Requires Mn(2+) as cofactor.

It catalyses the reaction L-seryl-[protein] + ATP = 3-O-(5'-adenylyl)-L-seryl-[protein] + diphosphate. The enzyme catalyses L-threonyl-[protein] + ATP = 3-O-(5'-adenylyl)-L-threonyl-[protein] + diphosphate. It carries out the reaction L-tyrosyl-[protein] + ATP = O-(5'-adenylyl)-L-tyrosyl-[protein] + diphosphate. The catalysed reaction is L-histidyl-[protein] + UTP = N(tele)-(5'-uridylyl)-L-histidyl-[protein] + diphosphate. It catalyses the reaction L-seryl-[protein] + UTP = O-(5'-uridylyl)-L-seryl-[protein] + diphosphate. The enzyme catalyses L-tyrosyl-[protein] + UTP = O-(5'-uridylyl)-L-tyrosyl-[protein] + diphosphate. In terms of biological role, nucleotidyltransferase involved in the post-translational modification of proteins. It can catalyze the addition of adenosine monophosphate (AMP) or uridine monophosphate (UMP) to a protein, resulting in modifications known as AMPylation and UMPylation. This chain is Protein nucleotidyltransferase YdiU, found in Synechococcus elongatus (strain ATCC 33912 / PCC 7942 / FACHB-805) (Anacystis nidulans R2).